The following is a 210-amino-acid chain: Large ribosomal subunit protein uL4 (210 aa).

Positions 57 to 78 are disordered; the sequence is VSGGGAKPWKQKGTGRARAGSN.

This sequence belongs to the universal ribosomal protein uL4 family. In terms of assembly, part of the 50S ribosomal subunit.

In terms of biological role, one of the primary rRNA binding proteins, this protein initially binds near the 5'-end of the 23S rRNA. It is important during the early stages of 50S assembly. It makes multiple contacts with different domains of the 23S rRNA in the assembled 50S subunit and ribosome. Forms part of the polypeptide exit tunnel. The chain is Large ribosomal subunit protein uL4 from Desulfovibrio desulfuricans (strain ATCC 27774 / DSM 6949 / MB).